The sequence spans 435 residues: Ras association domain-containing protein 9 (435 aa).

Residues 1–22 form a disordered region; the sequence is MAPFGRNLLKTRHKNRSPTKDM. In terms of domain architecture, Ras-associating spans 25–119; that stretch reads EEKEIVVWVC…MQFVLVKADA (95 aa). The stretch at 195-290 forms a coiled coil; sequence HTIHQQVKRM…DKLSAEIEKE (96 aa). The tract at residues 380-435 is disordered; it reads NRAKESEVPSSNGEIPPFTQRVFSNYTNDTDSDTGISSNHSQDSETTVGDVVLLST. Polar residues predominate over residues 400–426; it reads RVFSNYTNDTDSDTGISSNHSQDSETT.

Interacts with PAM.

Its subcellular location is the endosome. In terms of biological role, may play a role in regulating vesicuar trafficking in cells. This is Ras association domain-containing protein 9 (RASSF9) from Homo sapiens (Human).